The sequence spans 335 residues: Ornithine carbamoyltransferase, catabolic (335 aa).

Residues 59 to 62, Q86, R110, and 137 to 140 contribute to the carbamoyl phosphate site; these read STRT and HPTQ. Residues N169, D233, and 237-238 each bind L-ornithine; that span reads SM. Carbamoyl phosphate-binding positions include 274-275 and R319; that span reads CL.

Belongs to the aspartate/ornithine carbamoyltransferase superfamily. OTCase family.

The protein resides in the cytoplasm. It catalyses the reaction carbamoyl phosphate + L-ornithine = L-citrulline + phosphate + H(+). It participates in amino-acid degradation; L-arginine degradation via ADI pathway; carbamoyl phosphate from L-arginine: step 2/2. Functionally, reversibly catalyzes the transfer of the carbamoyl group from carbamoyl phosphate (CP) to the N(epsilon) atom of ornithine (ORN) to produce L-citrulline. The polypeptide is Ornithine carbamoyltransferase, catabolic (arcB) (Bacillus licheniformis (strain ATCC 14580 / DSM 13 / JCM 2505 / CCUG 7422 / NBRC 12200 / NCIMB 9375 / NCTC 10341 / NRRL NRS-1264 / Gibson 46)).